Here is a 328-residue protein sequence, read N- to C-terminus: Delta(3,5)-Delta(2,4)-dienoyl-CoA isomerase, mitochondrial (328 aa).

The transit peptide at 1 to 26 (MAAGIVASRRLRDLLTRRLTASNYPG) directs the protein to the mitochondrion. Substrate is bound by residues 116 to 120 (AGVDL) and Gly174. Lys231 bears the N6-succinyllysine mark. Ser268 is subject to Phosphoserine. Positions 326–328 (SKL) match the Microbody targeting signal motif. An N6-acetyllysine modification is found at Lys327.

It belongs to the enoyl-CoA hydratase/isomerase family. Homohexamer.

The protein localises to the mitochondrion. It localises to the peroxisome. It carries out the reaction (3E,5Z)-octadienoyl-CoA = (2E,4E)-octadienoyl-CoA. It catalyses the reaction (3E,5Z,8Z,11Z,14Z)-eicosapentaenoyl-CoA = (2E,4E,8Z,11Z,14Z)-eicosapentaenoyl-CoA. It functions in the pathway lipid metabolism; fatty acid beta-oxidation. Functionally, isomerization of 3-trans,5-cis-dienoyl-CoA to 2-trans,4-trans-dienoyl-CoA. This Pongo abelii (Sumatran orangutan) protein is Delta(3,5)-Delta(2,4)-dienoyl-CoA isomerase, mitochondrial (ECH1).